The following is a 152-amino-acid chain: Nucleoside diphosphate kinase (152 aa).

Residues lysine 10, phenylalanine 58, arginine 86, threonine 92, arginine 103, and asparagine 113 each contribute to the ATP site. The Pros-phosphohistidine intermediate role is filled by histidine 116.

It belongs to the NDK family. Mg(2+) serves as cofactor.

The protein localises to the cytoplasm. It carries out the reaction a 2'-deoxyribonucleoside 5'-diphosphate + ATP = a 2'-deoxyribonucleoside 5'-triphosphate + ADP. It catalyses the reaction a ribonucleoside 5'-diphosphate + ATP = a ribonucleoside 5'-triphosphate + ADP. Major role in the synthesis of nucleoside triphosphates other than ATP. The ATP gamma phosphate is transferred to the NDP beta phosphate via a ping-pong mechanism, using a phosphorylated active-site intermediate. In Methanosphaera stadtmanae (strain ATCC 43021 / DSM 3091 / JCM 11832 / MCB-3), this protein is Nucleoside diphosphate kinase.